A 160-amino-acid chain; its full sequence is 2-C-methyl-D-erythritol 2,4-cyclodiphosphate synthase (160 aa).

Positions 11 and 13 each coordinate a divalent metal cation. 4-CDP-2-C-methyl-D-erythritol 2-phosphate contacts are provided by residues 11-13 (DVH) and 37-38 (HS). H45 serves as a coordination point for a divalent metal cation. Residues 59-61 (DIG) and R145 contribute to the 4-CDP-2-C-methyl-D-erythritol 2-phosphate site.

This sequence belongs to the IspF family. In terms of assembly, homotrimer. Requires a divalent metal cation as cofactor.

It catalyses the reaction 4-CDP-2-C-methyl-D-erythritol 2-phosphate = 2-C-methyl-D-erythritol 2,4-cyclic diphosphate + CMP. The protein operates within isoprenoid biosynthesis; isopentenyl diphosphate biosynthesis via DXP pathway; isopentenyl diphosphate from 1-deoxy-D-xylulose 5-phosphate: step 4/6. Its function is as follows. Involved in the biosynthesis of isopentenyl diphosphate (IPP) and dimethylallyl diphosphate (DMAPP), two major building blocks of isoprenoid compounds. Catalyzes the conversion of 4-diphosphocytidyl-2-C-methyl-D-erythritol 2-phosphate (CDP-ME2P) to 2-C-methyl-D-erythritol 2,4-cyclodiphosphate (ME-CPP) with a corresponding release of cytidine 5-monophosphate (CMP). The sequence is that of 2-C-methyl-D-erythritol 2,4-cyclodiphosphate synthase from Neisseria meningitidis serogroup B (strain ATCC BAA-335 / MC58).